The primary structure comprises 171 residues: Putative antiporter subunit mnhG2 (171 aa).

Helical transmembrane passes span 11–31, 51–71, and 72–92; these read IAAL…IGIV, VLLT…FFSV, and RLLL…HLVA. A compositionally biased stretch (basic and acidic residues) spans 144 to 156; the sequence is DVQKQRQKEKQQE. Residues 144–171 form a disordered region; sequence DVQKQRQKEKQQEENIESLSEARRETKD.

It belongs to the CPA3 antiporters (TC 2.A.63) subunit G family. May form a heterooligomeric complex that consists of seven subunits: mnhA2, mnhB2, mnhC2, mnhD2, mnhE2, mnhF2 and mnhG2.

The protein resides in the cell membrane. This is Putative antiporter subunit mnhG2 (mnhG2) from Staphylococcus haemolyticus (strain JCSC1435).